The following is a 211-amino-acid chain: Large ribosomal subunit protein bL25 (211 aa).

2 disordered regions span residues 1 to 23 and 191 to 211; these read MAGE…AARQ and LRSA…AEEV. Positions 196–211 are enriched in acidic residues; the sequence is NEADEEETEEATAEEV.

It belongs to the bacterial ribosomal protein bL25 family. CTC subfamily. In terms of assembly, part of the 50S ribosomal subunit; part of the 5S rRNA/L5/L18/L25 subcomplex. Contacts the 5S rRNA. Binds to the 5S rRNA independently of L5 and L18.

This is one of the proteins that binds to the 5S RNA in the ribosome where it forms part of the central protuberance. This Dinoroseobacter shibae (strain DSM 16493 / NCIMB 14021 / DFL 12) protein is Large ribosomal subunit protein bL25.